A 710-amino-acid polypeptide reads, in one-letter code: Lactotransferrin (710 aa).

The signal sequence occupies residues 1–19; sequence MKLVFLVLLFLGALGLCLA. Phosphoserine; alternate is present on Phe-10. O-linked (GlcNAc) serine; alternate glycosylation is present at Phe-10. A critical for glycosaminoglycan, lipid A, lysozyme and DNA binding region spans residues 20 to 24; that stretch reads GRRRS. Bactericidal and antifungal activity stretches follow at residues 20-29 and 39-49; these read GRRRSVQWCA and FQWQRNMRKVR. The interval 21 to 22 is important for full bactericidal and antifungal activities; that stretch reads RR. Transferrin-like domains are found at residues 25-352 and 364-695; these read VQWC…NLRK and VVWC…NLKK. Intrachain disulfides connect Cys-28–Cys-64 and Cys-38–Cys-55. Interaction with PspA regions lie at residues 39-46 and 57-58; these read FQWQRNMR and KR. Residues 39–49 form an interaction with lipopolysaccharide region; that stretch reads FQWQRNMRKVR. An involved in glycosaminoglycan binding region spans residues 46-51; that stretch reads RKVRGP. A Fe(3+)-binding site is contributed by Asp-79. Lys-92 is a catalytic residue. A Fe(3+)-binding site is contributed by Tyr-111. Cystine bridges form between Cys-134/Cys-217, Cys-176/Cys-192, Cys-189/Cys-200, and Cys-250/Cys-264. Residues Thr-136, Arg-140, Ala-142, and Gly-143 each coordinate hydrogencarbonate. N-linked (GlcNAc...) asparagine glycosylation occurs at Asn-156. Tyr-211 provides a ligand contact to Fe(3+). His-272 lines the Fe(3+) pocket. The Nucleophile role is filled by Ser-278. Cystine bridges form between Cys-367-Cys-399 and Cys-377-Cys-390. Residues Gln-379 and Ser-391 each participate in a glycyl lysine isopeptide (Lys-Gly) (interchain with G-Cter in ubiquitin) cross-link. Asp-414 and Tyr-454 together coordinate Fe(3+). Cystine bridges form between Cys-424/Cys-705, Cys-446/Cys-668, Cys-478/Cys-553, Cys-502/Cys-696, Cys-512/Cys-526, Cys-523/Cys-536, Cys-594/Cys-608, and Cys-646/Cys-651. Hydrogencarbonate-binding residues include Thr-480, Arg-484, Ala-486, and Gly-487. A glycan (N-linked (GlcNAc...) asparagine) is linked at Asn-497. Fe(3+) is bound at residue Tyr-547. A Fe(3+)-binding site is contributed by His-616. A glycan (N-linked (GlcNAc...) asparagine) is linked at Asn-642.

This sequence belongs to the transferrin family. Monomer. Found in a complex with LTF, CLU, EPPIN and SEMG1. Found in a complex with MPO and LTF; interacts directly with CP, allows Fe(3+) incorporation into LTF and activation of CP ferroxidase activity. Phosphorylation at Ser-10 activates the transcriptional activity. Phosphorylation at Ser-10 also promotes proteasomal degradation. Alternatively can undergo O-GlcNAcylation at Ser-10. In terms of processing, O-GlcNAcylation at Ser-10 inhibits DNA binding and negatively regulates the transcriptional activity. Alternatively can undergo phosphorylation at Ser-10. Post-translationally, poly-N-acetyllactosaminic carbohydrate moiety seems to be needed for TLR4 activation. In terms of tissue distribution, high levels are found in saliva and tears, intermediate levels in serum and plasma, and low levels in urine. In kidney, detected in the distal collecting tubules in the medulla but not in the cortical region or in blood vessels. Detected in peripheral blood neutrophils (at protein level). Isoform 1 and isoform DeltaLf are expressed in breast, prostate, spleen, pancreas, kidney, small intestine, lung, skeletal muscle, uterus, thymus and fetal liver. Isoform 1 is expressed in brain, testis and peripheral blood leukocytes; isoform DeltaLf is barely detectable in these tissues. Isoform DeltaLf is expressed in placenta, liver and ovary; isoform 1 is barely detectable in these tissues. In kidney, isoform 1 is expressed at high levels in the collecting tubules of the medulla but at very low levels in the cortex.

The protein resides in the secreted. It localises to the cytoplasmic granule. The protein localises to the cytoplasm. It is found in the nucleus. Its function is as follows. Transferrins are iron binding transport proteins which can bind two Fe(3+) ions in association with the binding of an anion, usually bicarbonate. Major iron-binding and multifunctional protein found in exocrine fluids such as breast milk and mucosal secretions. Has antimicrobial activity, which depends on the extracellular cation concentration. Antimicrobial properties include bacteriostasis, which is related to its ability to sequester free iron and thus inhibit microbial growth, as well as direct bactericidal properties leading to the release of lipopolysaccharides from the bacterial outer membrane. Can also prevent bacterial biofilm development in P.aeruginosa infection. Has weak antifungal activity against C.albicans. Has anabolic, differentiating and anti-apoptotic effects on osteoblasts and can also inhibit osteoclastogenesis, possibly playing a role in the regulation of bone growth. Promotes binding of species C adenoviruses to epithelial cells, promoting adenovirus infection. Can inhibit papillomavirus infections. Stimulates the TLR4 signaling pathway leading to NF-kappa-B activation and subsequent pro-inflammatory cytokine production while also interfering with the lipopolysaccharide (LPS)-stimulated TLR4 signaling. Inhibits neutrophil granulocyte migration to sites of apoptosis, when secreted by apoptotic cells. Stimulates VEGFA-mediated endothelial cell migration and proliferation. Binds heparin, chondroitin sulfate and possibly other glycosaminoglycans (GAGs). Also binds specifically to pneumococcal surface protein A (PspA), the lipid A portion of bacterial lipopolysaccharide (LPS), lysozyme and DNA. Functionally, lactoferricin binds to the bacterial surface and is crucial for the bactericidal functions. Has some antiviral activity against papillomavirus infection. N-terminal region shows strong antifungal activity against C.albicans. Contains two BBXB heparin-binding consensus sequences that appear to form the predominate functional GAG-binding site. In terms of biological role, has antimicrobial activity and is able to permeabilize different ions through liposomal membranes. Its function is as follows. Has opioid antagonist activity. Shows preference for mu-receptor. Has opioid antagonist activity. Shows higher degrees of preference for kappa-receptors than for mu-receptors. Functionally, the lactotransferrin transferrin-like domain 1 functions as a serine protease of the peptidase S60 family that cuts arginine rich regions. This function contributes to the antimicrobial activity. Shows a preferential cleavage at -Arg-Ser-Arg-Arg-|- and -Arg-Arg-Ser-Arg-|-, and of Z-Phe-Arg-|-aminomethylcoumarin sites. In terms of biological role, transcription factor with antiproliferative properties and ability to induce cell cycle arrest. Binds to the DeltaLf response element found in the SKP1, BAX, DCPS, and SELENOH promoters. This Homo sapiens (Human) protein is Lactotransferrin.